Here is a 290-residue protein sequence, read N- to C-terminus: S-adenosylmethionine-dependent nucleotide dehydratase (290 aa).

Residues 6 to 226 (SGNNIIPSVN…VNRHSKNKFL (221 aa)) form the Radical SAM core domain. Residues cysteine 22, cysteine 26, and cysteine 29 each contribute to the [4Fe-4S] cluster site.

Belongs to the radical SAM superfamily. Viperin family. It depends on [4Fe-4S] cluster as a cofactor.

It catalyses the reaction UTP + AH2 + S-adenosyl-L-methionine = 3'-deoxy-3',4'-didehydro-UTP + 5'-deoxyadenosine + L-methionine + A + H2O + H(+). Its function is as follows. Expression of pVip47 in E.coli (strain MG1655) confers resistance to phage P1; has no effect against T7. Catalyzes the conversion of uridine triphosphate (UTP) to 3'-deoxy-3',4'-didehydro-UTP (ddhUTP), probably via a SAM-dependent radical mechanism. The modified nucleotide represses transcription from T7 RNA polymerase-directed genes (possibly by acting as chain terminators), strongly suggesting these nucleotides block viral polymerase transcription. How this protein allows bacteria to resist viruses that do not encode their own RNA polymerase (such as lambda, P1) is unknown. This chain is S-adenosylmethionine-dependent nucleotide dehydratase, found in Flammeovirga pacifica.